Consider the following 185-residue polypeptide: Ribosome-recycling factor (185 aa).

It belongs to the RRF family.

It is found in the cytoplasm. Functionally, responsible for the release of ribosomes from messenger RNA at the termination of protein biosynthesis. May increase the efficiency of translation by recycling ribosomes from one round of translation to another. In Streptomyces avermitilis (strain ATCC 31267 / DSM 46492 / JCM 5070 / NBRC 14893 / NCIMB 12804 / NRRL 8165 / MA-4680), this protein is Ribosome-recycling factor.